The chain runs to 289 residues: Shikimate dehydrogenase (NADP(+)) (289 aa).

Residues 22 to 24 (SRS) and threonine 69 contribute to the shikimate site. The active-site Proton acceptor is lysine 73. Residue glutamate 85 coordinates NADP(+). Shikimate-binding residues include asparagine 94 and aspartate 109. NADP(+)-binding positions include 134–138 (GAGGA), 158–163 (NRTLSR), and isoleucine 226. Position 228 (tyrosine 228) interacts with shikimate. Residue glycine 249 participates in NADP(+) binding.

It belongs to the shikimate dehydrogenase family. As to quaternary structure, homodimer.

It catalyses the reaction shikimate + NADP(+) = 3-dehydroshikimate + NADPH + H(+). The protein operates within metabolic intermediate biosynthesis; chorismate biosynthesis; chorismate from D-erythrose 4-phosphate and phosphoenolpyruvate: step 4/7. In terms of biological role, involved in the biosynthesis of the chorismate, which leads to the biosynthesis of aromatic amino acids. Catalyzes the reversible NADPH linked reduction of 3-dehydroshikimate (DHSA) to yield shikimate (SA). This Brucella ovis (strain ATCC 25840 / 63/290 / NCTC 10512) protein is Shikimate dehydrogenase (NADP(+)).